The chain runs to 296 residues: GTPase Era (296 aa).

Residues 3–170 enclose the Era-type G domain; the sequence is KSGFITIVGR…LELMVKYLPE (168 aa). Residues 11 to 18 form a G1 region; that stretch reads GRPNVGKS. Residue 11 to 18 participates in GTP binding; sequence GRPNVGKS. The interval 37 to 41 is G2; that stretch reads QTTRN. Positions 58–61 are G3; sequence DTPG. GTP-binding positions include 58 to 62 and 120 to 123; these read DTPGI and NKVD. A G4 region spans residues 120-123; the sequence is NKVD. A G5 region spans residues 149–151; it reads ISA. The 78-residue stretch at 201-278 folds into the KH type-2 domain; that stretch reads LSQEVPHGIA…NIKIWVKVRK (78 aa).

The protein belongs to the TRAFAC class TrmE-Era-EngA-EngB-Septin-like GTPase superfamily. Era GTPase family. Monomer.

It localises to the cytoplasm. Its subcellular location is the cell membrane. Functionally, an essential GTPase that binds both GDP and GTP, with rapid nucleotide exchange. Plays a role in 16S rRNA processing and 30S ribosomal subunit biogenesis and possibly also in cell cycle regulation and energy metabolism. This Clostridium perfringens (strain ATCC 13124 / DSM 756 / JCM 1290 / NCIMB 6125 / NCTC 8237 / Type A) protein is GTPase Era.